The following is a 513-amino-acid chain: 2,3-bisphosphoglycerate-independent phosphoglycerate mutase (513 aa).

Mn(2+)-binding residues include aspartate 13 and serine 63. Serine 63 serves as the catalytic Phosphoserine intermediate. Substrate is bound by residues histidine 124, arginine 154–aspartate 155, arginine 186, arginine 192, arginine 262–arginine 265, and lysine 335. Aspartate 403, histidine 407, aspartate 444, histidine 445, and histidine 463 together coordinate Mn(2+).

This sequence belongs to the BPG-independent phosphoglycerate mutase family. Monomer. Requires Mn(2+) as cofactor.

It catalyses the reaction (2R)-2-phosphoglycerate = (2R)-3-phosphoglycerate. The protein operates within carbohydrate degradation; glycolysis; pyruvate from D-glyceraldehyde 3-phosphate: step 3/5. In terms of biological role, catalyzes the interconversion of 2-phosphoglycerate and 3-phosphoglycerate. In Myxococcus xanthus (strain DK1622), this protein is 2,3-bisphosphoglycerate-independent phosphoglycerate mutase.